The sequence spans 182 residues: Dephospho-CoA kinase (182 aa).

The DPCK domain maps to 4 to 182 (VVAITGGIGS…IINNDHKIMT (179 aa)). Residue 12 to 17 (GSGKTT) coordinates ATP.

The protein belongs to the CoaE family.

The protein resides in the cytoplasm. The enzyme catalyses 3'-dephospho-CoA + ATP = ADP + CoA + H(+). The protein operates within cofactor biosynthesis; coenzyme A biosynthesis; CoA from (R)-pantothenate: step 5/5. In terms of biological role, catalyzes the phosphorylation of the 3'-hydroxyl group of dephosphocoenzyme A to form coenzyme A. The sequence is that of Dephospho-CoA kinase from Aliivibrio fischeri (strain ATCC 700601 / ES114) (Vibrio fischeri).